The primary structure comprises 252 residues: Uracil-DNA glycosylase (252 aa).

The active-site Proton acceptor is D87.

It belongs to the uracil-DNA glycosylase (UDG) superfamily. UNG family.

Its subcellular location is the host nucleus. The catalysed reaction is Hydrolyzes single-stranded DNA or mismatched double-stranded DNA and polynucleotides, releasing free uracil.. Excises uracil residues from the DNA which can arise as a result of misincorporation of dUMP residues by DNA polymerase or deamination of cytosines. Therefore may reduce deleterious uracil incorporation into the viral genome, particularly in terminally differentiated cells which lack DNA repair enzymes. The protein is Uracil-DNA glycosylase (46) of Saimiri sciureus (Common squirrel monkey).